The sequence spans 87 residues: HssA/B-like protein 55 (87 aa).

Positions 1 to 13 are enriched in polar residues; sequence MTILSAITSISRP. The segment at 1–31 is disordered; that stretch reads MTILSAITSISRPNKSSKSVVSSNGGSSLSM. Low complexity predominate over residues 14–31; it reads NKSSKSVVSSNGGSSLSM.

It belongs to the hssA/B family.

The protein is HssA/B-like protein 55 (hssl55) of Dictyostelium discoideum (Social amoeba).